The chain runs to 164 residues: UPF0305 protein MJ0646 (164 aa).

This sequence belongs to the UPF0305 family.

This Methanocaldococcus jannaschii (strain ATCC 43067 / DSM 2661 / JAL-1 / JCM 10045 / NBRC 100440) (Methanococcus jannaschii) protein is UPF0305 protein MJ0646.